The chain runs to 824 residues: Type IV secretion system protein PtlC homolog (824 aa).

456 to 463 (GQSGSGKT) serves as a coordination point for ATP.

Belongs to the TrbE/VirB4 family.

The protein resides in the cell membrane. The sequence is that of Type IV secretion system protein PtlC homolog (ptlC) from Bordetella bronchiseptica (strain ATCC BAA-588 / NCTC 13252 / RB50) (Alcaligenes bronchisepticus).